A 248-amino-acid chain; its full sequence is Probable transcriptional regulatory protein Acid_5948 (248 aa).

Belongs to the TACO1 family.

The protein resides in the cytoplasm. This chain is Probable transcriptional regulatory protein Acid_5948, found in Solibacter usitatus (strain Ellin6076).